The following is a 96-amino-acid chain: UPF0235 protein Ent638_3359 (96 aa).

The protein belongs to the UPF0235 family.

The polypeptide is UPF0235 protein Ent638_3359 (Enterobacter sp. (strain 638)).